A 601-amino-acid chain; its full sequence is Elongation factor 4 (601 aa).

The 183-residue stretch at Glu5 to Lys187 folds into the tr-type G domain. GTP is bound by residues Asp17–Thr22 and Asn134–Asp137.

It belongs to the TRAFAC class translation factor GTPase superfamily. Classic translation factor GTPase family. LepA subfamily.

Its subcellular location is the cell inner membrane. It carries out the reaction GTP + H2O = GDP + phosphate + H(+). Required for accurate and efficient protein synthesis under certain stress conditions. May act as a fidelity factor of the translation reaction, by catalyzing a one-codon backward translocation of tRNAs on improperly translocated ribosomes. Back-translocation proceeds from a post-translocation (POST) complex to a pre-translocation (PRE) complex, thus giving elongation factor G a second chance to translocate the tRNAs correctly. Binds to ribosomes in a GTP-dependent manner. This is Elongation factor 4 from Desulfovibrio desulfuricans (strain ATCC 27774 / DSM 6949 / MB).